The following is a 172-amino-acid chain: Adenine phosphoribosyltransferase (172 aa).

It belongs to the purine/pyrimidine phosphoribosyltransferase family. Homodimer.

Its subcellular location is the cytoplasm. It carries out the reaction AMP + diphosphate = 5-phospho-alpha-D-ribose 1-diphosphate + adenine. It participates in purine metabolism; AMP biosynthesis via salvage pathway; AMP from adenine: step 1/1. Its function is as follows. Catalyzes a salvage reaction resulting in the formation of AMP, that is energically less costly than de novo synthesis. In Hydrogenovibrio crunogenus (strain DSM 25203 / XCL-2) (Thiomicrospira crunogena), this protein is Adenine phosphoribosyltransferase.